Consider the following 395-residue polypeptide: Na(+)/H(+) antiporter NhaA (395 aa).

The next 11 membrane-spanning stretches (helical) occupy residues 15 to 35 (FLGSPSGGACVLLLASLAGFV), 66 to 86 (IDAWVSDGFMTLFFLVVILEI), 101 to 121 (VALPLIGALGGMIVPALTYLL), 132 to 152 (GWAIPVATDAAFTLPIILALG), 161 to 181 (AWLMALAIFDDVLGIVVIAVF), 184 to 204 (NALYWPALAAAVVVTAALIGA), 219 to 239 (CILLWIALLGSGLHPTLAGVI), 265 to 285 (ALTPVVTWVILPLFGFMNVGV), 301 to 321 (LGIMSGLLIGKPVGVFSATLL), 339 to 359 (VFGLSLLCGIGFTISLFIANL), and 366 to 386 (LVIPAKMGIFAGSVLSALAGW).

The protein belongs to the NhaA Na(+)/H(+) (TC 2.A.33) antiporter family.

The protein localises to the cell inner membrane. The catalysed reaction is Na(+)(in) + 2 H(+)(out) = Na(+)(out) + 2 H(+)(in). Functionally, na(+)/H(+) antiporter that extrudes sodium in exchange for external protons. In Gluconacetobacter diazotrophicus (strain ATCC 49037 / DSM 5601 / CCUG 37298 / CIP 103539 / LMG 7603 / PAl5), this protein is Na(+)/H(+) antiporter NhaA.